The chain runs to 434 residues: MAIHSSFEALAYQSGFANQFSSEALPGALPMGQNSPQKHPLGLYAEQFSGTAFTVARNEARRTWLYRIKPSAAHPRYQRMDRQITGREQGPINPNRLRWNAFDIPAEPVDFIDGLIALASTSAADQAEGVSVYVYAANTSMQRAFFSADGEWLIVPQQGRLRIITEMGVLDIGPLEIAVLPRGLKFSVQLLDGSARGYLCENHGGVLRLPELGPIGSNGLANPRDFLTPVAWFEERDEPVQLVQKFLGELWTTQLQHSPFDVVGWHGNNVPYTYDLRRFNTIGTVSYDHPDPSIFTVLTSPGAVHGQANIDFVIFPPRWMVAENTFRPPWFHRNLMNEFMGLIDGAYDAKAEGFMPGGSSLHNCMSAHGPDNITAEKAIAADLKPHKIENTMAFMFETGKVLRPSLHALACPQLQADYDACWNGMARTFNKESS.

His-289 (proton acceptor) is an active-site residue. The Fe cation site is built by His-332 and Glu-338. The homogentisate site is built by Tyr-347 and His-368. His-368 lines the Fe cation pocket.

The protein belongs to the homogentisate dioxygenase family. Hexamer; dimer of trimers. Fe cation is required as a cofactor.

The enzyme catalyses homogentisate + O2 = 4-maleylacetoacetate + H(+). It participates in amino-acid degradation; L-phenylalanine degradation; acetoacetate and fumarate from L-phenylalanine: step 4/6. Functionally, involved in the catabolism of homogentisate (2,5-dihydroxyphenylacetate or 2,5-OH-PhAc), a central intermediate in the degradation of phenylalanine and tyrosine. Catalyzes the oxidative ring cleavage of the aromatic ring of homogentisate to yield maleylacetoacetate. The chain is Homogentisate 1,2-dioxygenase from Pseudomonas syringae pv. tomato (strain ATCC BAA-871 / DC3000).